The primary structure comprises 946 residues: Bifunctional glutamine synthetase adenylyltransferase/adenylyl-removing enzyme (946 aa).

Residues 1–440 (MKPLSSPLQQ…VFNELIGDDE (440 aa)) form an adenylyl removase region. Positions 449–946 (SEQWRELWQD…ASWQKWLVEE (498 aa)) are adenylyl transferase.

The protein belongs to the GlnE family. Mg(2+) serves as cofactor.

It catalyses the reaction [glutamine synthetase]-O(4)-(5'-adenylyl)-L-tyrosine + phosphate = [glutamine synthetase]-L-tyrosine + ADP. The catalysed reaction is [glutamine synthetase]-L-tyrosine + ATP = [glutamine synthetase]-O(4)-(5'-adenylyl)-L-tyrosine + diphosphate. In terms of biological role, involved in the regulation of glutamine synthetase GlnA, a key enzyme in the process to assimilate ammonia. When cellular nitrogen levels are high, the C-terminal adenylyl transferase (AT) inactivates GlnA by covalent transfer of an adenylyl group from ATP to specific tyrosine residue of GlnA, thus reducing its activity. Conversely, when nitrogen levels are low, the N-terminal adenylyl removase (AR) activates GlnA by removing the adenylyl group by phosphorolysis, increasing its activity. The regulatory region of GlnE binds the signal transduction protein PII (GlnB) which indicates the nitrogen status of the cell. This Escherichia coli O9:H4 (strain HS) protein is Bifunctional glutamine synthetase adenylyltransferase/adenylyl-removing enzyme.